A 415-amino-acid chain; its full sequence is Actin-like protein 9 (415 aa).

Residues 1–22 (MDVNGHPKFQPSPETDGPLPLT) form a disordered region.

Belongs to the actin family. Interacts with ACTL7A.

It is found in the cytoplasmic vesicle. It localises to the secretory vesicle. Its subcellular location is the acrosome. The protein localises to the cytoplasm. The protein resides in the cytoskeleton. It is found in the perinuclear theca. In terms of biological role, testis-specic protein that plays an important role in fusion of proacrosomal vesicles and perinuclear theca formation. The chain is Actin-like protein 9 (Actl9) from Mus musculus (Mouse).